A 141-amino-acid chain; its full sequence is Nucleoside diphosphate kinase (141 aa).

ATP contacts are provided by lysine 11, phenylalanine 59, arginine 87, threonine 93, arginine 104, and asparagine 114.

It belongs to the NDK family. In terms of assembly, homotetramer. Requires Mg(2+) as cofactor.

The protein localises to the cytoplasm. The enzyme catalyses a 2'-deoxyribonucleoside 5'-diphosphate + ATP = a 2'-deoxyribonucleoside 5'-triphosphate + ADP. It carries out the reaction a ribonucleoside 5'-diphosphate + ATP = a ribonucleoside 5'-triphosphate + ADP. Functionally, major role in the synthesis of nucleoside triphosphates other than ATP. The ATP gamma phosphate is transferred to the NDP beta phosphate via a ping-pong mechanism, using a phosphorylated active-site intermediate. This is Nucleoside diphosphate kinase from Saccharophagus degradans (strain 2-40 / ATCC 43961 / DSM 17024).